A 103-amino-acid polypeptide reads, in one-letter code: Large ribosomal subunit protein eL21 (103 aa).

The protein belongs to the eukaryotic ribosomal protein eL21 family.

In Sulfolobus acidocaldarius (strain ATCC 33909 / DSM 639 / JCM 8929 / NBRC 15157 / NCIMB 11770), this protein is Large ribosomal subunit protein eL21.